A 1118-amino-acid polypeptide reads, in one-letter code: Ubiquitin carboxyl-terminal hydrolase 8 (1118 aa).

The MIT domain maps to 33 to 116 (TKSYVHSALK…ESLKLRYEEA (84 aa)). Basic and acidic residues-rich tracts occupy residues 120-146 (KKLEEKDRQEEAQRLQQKRQETGREDG) and 158-177 (LDSKDKTQKSNGEKNEKCET). The tract at residues 120-177 (KKLEEKDRQEEAQRLQQKRQETGREDGGTLAKGSLENVLDSKDKTQKSNGEKNEKCET) is disordered. S160 carries the phosphoserine modification. A Rhodanese domain is found at 195–313 (KNISLIIMDA…WLLCYPQYTT (119 aa)). Phosphoserine is present on residues S392 and S400. The segment at 402 to 447 (KNVPQIDRTKKPAVKLPEEHRIKSESTNHEQQSPQSGKVIPDRSTK) is disordered. The short motif at 405–413 (PQIDRTKKP) is the SH3-binding element. The span at 417 to 429 (LPEEHRIKSESTN) shows a compositional bias: basic and acidic residues. The residue at position 452 (S452) is a Phosphoserine. Over residues 475 to 573 (KNKQEKELRE…AKKSVEDRGK (99 aa)) the composition is skewed to basic and acidic residues. 2 disordered regions span residues 475 to 648 (KNKQ…GRIV) and 679 to 746 (YPPE…ENKP). T577 is subject to Phosphothreonine. The span at 618-645 (TFREDTDDTERNKAQREPLTRARSEEMG) shows a compositional bias: basic and acidic residues. Over residues 716–726 (SYSSPDITQAI) the composition is skewed to polar residues. S718 and S719 each carry phosphoserine. The region spanning 777-1109 (TGLRNLGNTC…AAYILFYTSL (333 aa)) is the USP domain. C786 serves as the catalytic Nucleophile. Phosphothreonine is present on T945. H1067 acts as the Proton acceptor in catalysis.

It belongs to the peptidase C19 family. In terms of assembly, forms a ternary complex with RNF128 and OTUB1. Interacts (via C-terminal UCH catalytic domain) with OTUB1 isoform 1. Interacts with STAM2 (via SH3 domain). Interacts with DNAJB3, EGFR, EPS15, RASGRF1, RNF41, YWHAE, YWHAG and YWHAZ. Interacts with NBR1, RASGRF1, RNF41 and IST1. Associates with the ESCRT-0 complex and with microtubules. Interacts with BIRC6/bruce and KIF23/MKLP1. (Microbial infection) Interacts with Zika virus non-structural protein 1. Post-translationally, phosphorylation of Ser-718 is essential for interaction with YWHAE and for cytosol localization. Undergoes dephosphorylation at Ser-718 in the M phase. Tyrosine-phosphorylated in its N-terminal half in an EGFR-dependent manner. In terms of processing, ubiquitinated. Inactive form is mostly monoubiquitinated, but polyubiquitination happens too. Ubiquitination is increased in EGF-stimulated cells. Ubiquitination of active form is undetectable, suggesting a possibility that USP8 deubiquitinates itself, thereby regulating its own function.

Its subcellular location is the cytoplasm. It is found in the nucleus. The protein localises to the endosome membrane. The protein resides in the cell membrane. It catalyses the reaction Thiol-dependent hydrolysis of ester, thioester, amide, peptide and isopeptide bonds formed by the C-terminal Gly of ubiquitin (a 76-residue protein attached to proteins as an intracellular targeting signal).. In terms of biological role, hydrolase that can remove conjugated ubiquitin from proteins and therefore plays an important regulatory role at the level of protein turnover by preventing degradation. Converts both 'Lys-48' an 'Lys-63'-linked ubiquitin chains. Catalytic activity is enhanced in the M phase. Involved in cell proliferation. Required to enter into S phase in response to serum stimulation. May regulate T-cell anergy mediated by RNF128 via the formation of a complex containing RNF128 and OTUB1. Probably regulates the stability of STAM2 and RASGRF1. Regulates endosomal ubiquitin dynamics, cargo sorting, membrane traffic at early endosomes, and maintenance of ESCRT-0 stability. The level of protein ubiquitination on endosomes is essential for maintaining the morphology of the organelle. Deubiquitinates EPS15 and controls tyrosine kinase stability. Removes conjugated ubiquitin from EGFR thus regulating EGFR degradation and downstream MAPK signaling. Involved in acrosome biogenesis through interaction with the spermatid ESCRT-0 complex and microtubules. Deubiquitinates BIRC6/bruce and KIF23/MKLP1. Deubiquitinates BACE1 which inhibits BACE1 lysosomal degradation and modulates BACE-mediated APP cleavage and amyloid-beta formation. This is Ubiquitin carboxyl-terminal hydrolase 8 from Homo sapiens (Human).